A 212-amino-acid chain; its full sequence is Imidazole glycerol phosphate synthase subunit HisH (212 aa).

The Glutamine amidotransferase type-1 domain maps to 2–212; the sequence is RVVVIDYNGG…ILGNFLRWTS (211 aa). Cysteine 85 (nucleophile) is an active-site residue. Active-site residues include histidine 192 and glutamate 194.

Heterodimer of HisH and HisF.

It localises to the cytoplasm. It carries out the reaction 5-[(5-phospho-1-deoxy-D-ribulos-1-ylimino)methylamino]-1-(5-phospho-beta-D-ribosyl)imidazole-4-carboxamide + L-glutamine = D-erythro-1-(imidazol-4-yl)glycerol 3-phosphate + 5-amino-1-(5-phospho-beta-D-ribosyl)imidazole-4-carboxamide + L-glutamate + H(+). It catalyses the reaction L-glutamine + H2O = L-glutamate + NH4(+). Its pathway is amino-acid biosynthesis; L-histidine biosynthesis; L-histidine from 5-phospho-alpha-D-ribose 1-diphosphate: step 5/9. IGPS catalyzes the conversion of PRFAR and glutamine to IGP, AICAR and glutamate. The HisH subunit catalyzes the hydrolysis of glutamine to glutamate and ammonia as part of the synthesis of IGP and AICAR. The resulting ammonia molecule is channeled to the active site of HisF. The polypeptide is Imidazole glycerol phosphate synthase subunit HisH (Gluconobacter oxydans (strain 621H) (Gluconobacter suboxydans)).